We begin with the raw amino-acid sequence, 134 residues long: Replication enhancer protein (134 aa).

This sequence belongs to the geminiviridae replication enhancer protein family. Homooligomer. Interacts with the replication-associated protein (REP). Interacts with host proliferating cell nuclear antigen (PCNA). Interacts with host retinoblastoma-related protein 1 (RBR1), and may thereby deregulate the host cell cycle. Oligomerization and interaction with PCNA are necessary for optimal replication enhancement.

In terms of biological role, increases viral DNA accumulation. Enhances infectivity and symptom expression. The sequence is that of Replication enhancer protein from Cynanchum acutum (Tomato).